A 303-amino-acid chain; its full sequence is WD repeat-containing protein 38 (303 aa).

WD repeat units follow at residues 24–63 (QHHG…LLWR), 66–105 (GHRG…CLHV), 108–147 (GHQR…RVHL), 150–189 (GHCD…PVVS), 195–233 (GHTG…LPLQ), 236–277 (GHTI…ETLK), and 279–303 (MLDV…AVTR).

In Mus musculus (Mouse), this protein is WD repeat-containing protein 38 (Wdr38).